A 347-amino-acid chain; its full sequence is Dihydroorotase (347 aa).

H14 and H16 together coordinate Zn(2+). Residues 16-18 (HLR) and N42 contribute to the substrate site. Zn(2+)-binding residues include K100, H137, and H175. K100 carries the post-translational modification N6-carboxylysine. H137 serves as a coordination point for substrate. A substrate-binding site is contributed by L220. D248 lines the Zn(2+) pocket. The active site involves D248. Residues H252 and A264 each coordinate substrate.

The protein belongs to the metallo-dependent hydrolases superfamily. DHOase family. Class II DHOase subfamily. Homodimer. Requires Zn(2+) as cofactor.

The enzyme catalyses (S)-dihydroorotate + H2O = N-carbamoyl-L-aspartate + H(+). It functions in the pathway pyrimidine metabolism; UMP biosynthesis via de novo pathway; (S)-dihydroorotate from bicarbonate: step 3/3. Its function is as follows. Catalyzes the reversible cyclization of carbamoyl aspartate to dihydroorotate. The sequence is that of Dihydroorotase from Jannaschia sp. (strain CCS1).